The chain runs to 427 residues: 3-phosphoshikimate 1-carboxyvinyltransferase (427 aa).

A phosphoenolpyruvate-binding site is contributed by Lys-20. Residues Ser-21 and Arg-25 each contribute to the 3-phosphoshikimate site. Residues Gly-92 and Arg-120 each coordinate phosphoenolpyruvate. Ser-166, Ala-167, Gln-168, Asp-312, and Lys-339 together coordinate 3-phosphoshikimate. Gln-168 lines the phosphoenolpyruvate pocket. Asp-312 functions as the Proton acceptor in the catalytic mechanism. Residues Arg-343 and Arg-385 each coordinate phosphoenolpyruvate.

Homotetramer.

Its subcellular location is the cytoplasm. The catalysed reaction is 3-phosphoshikimate + phosphoenolpyruvate = 5-O-(1-carboxyvinyl)-3-phosphoshikimate + phosphate. It participates in metabolic intermediate biosynthesis; chorismate biosynthesis; chorismate from D-erythrose 4-phosphate and phosphoenolpyruvate: step 6/7. Competitively inhibited by glyphosate. Activated by ammonium, rubidium or potassium ions. In terms of biological role, catalyzes the transfer of the enolpyruvyl moiety of phosphoenolpyruvate (PEP) to the 5-hydroxyl of shikimate-3-phosphate (S3P) to produce enolpyruvyl shikimate-3-phosphate and inorganic phosphate. This chain is 3-phosphoshikimate 1-carboxyvinyltransferase, found in Streptococcus pneumoniae serotype 4 (strain ATCC BAA-334 / TIGR4).